The primary structure comprises 282 residues: Ribosomal RNA small subunit methyltransferase I (282 aa).

This sequence belongs to the methyltransferase superfamily. RsmI family.

It is found in the cytoplasm. It catalyses the reaction cytidine(1402) in 16S rRNA + S-adenosyl-L-methionine = 2'-O-methylcytidine(1402) in 16S rRNA + S-adenosyl-L-homocysteine + H(+). In terms of biological role, catalyzes the 2'-O-methylation of the ribose of cytidine 1402 (C1402) in 16S rRNA. The polypeptide is Ribosomal RNA small subunit methyltransferase I (Pseudomonas aeruginosa (strain ATCC 15692 / DSM 22644 / CIP 104116 / JCM 14847 / LMG 12228 / 1C / PRS 101 / PAO1)).